Here is a 1184-residue protein sequence, read N- to C-terminus: von Willebrand factor A domain-containing protein 3A (1184 aa).

The signal sequence occupies residues 1–24; the sequence is MKKYRKISIGCFAMATQTSHVFHG. Positions 40-62 are disordered; sequence GRDSKKPLKQKNMNGLGQNSDNG. Residues 50 to 62 are compositionally biased toward polar residues; the sequence is KNMNGLGQNSDNG. Residues 333–357 are a coiled coil; that stretch reads TSRDMDELLAEIQKAQSLLSHVQAL. In terms of domain architecture, VWFA 1 spans 511-708; it reads RVVVLLDISA…SIMSEMEKAL (198 aa). N-linked (GlcNAc...) asparagine glycosylation occurs at Asn709. The interval 729–780 is disordered; the sequence is LGSSALPKEKPKTLQLRSQPKKLCPPRPTVPLGARMSIKDDPDREKSPPLKS. The span at 765-776 shows a compositional bias: basic and acidic residues; it reads SIKDDPDREKSP. In terms of domain architecture, VWFA 2 spans 959–1131; it reads KVCILLDTSG…KIHSLLTKGF (173 aa).

Its subcellular location is the secreted. The sequence is that of von Willebrand factor A domain-containing protein 3A (VWA3A) from Homo sapiens (Human).